A 36-amino-acid chain; its full sequence is Photosystem II reaction center protein Y (36 aa).

The Lumenal segment spans residues 1–4 (MDTR). A helical membrane pass occupies residues 5–23 (LLVIAAPVLVAASWALFNI). The Stromal segment spans residues 24-36 (GRLAIQQIQRLSR).

The protein belongs to the PsbY family. As to quaternary structure, PSII is composed of 1 copy each of membrane proteins PsbA, PsbB, PsbC, PsbD, PsbE, PsbF, PsbH, PsbI, PsbJ, PsbK, PsbL, PsbM, PsbT, PsbX, PsbY, PsbZ, Psb30/Ycf12, at least 3 peripheral proteins of the oxygen-evolving complex and a large number of cofactors. It forms dimeric complexes.

The protein localises to the plastid. It is found in the chloroplast thylakoid membrane. Functionally, loosely associated component of the core of photosystem II (PSII), it is not always seen in crystals. PSII is a light-driven water plastoquinone oxidoreductase, using light energy to abstract electrons from H(2)O, generating a proton gradient subsequently used for ATP formation. The protein is Photosystem II reaction center protein Y of Thalassiosira pseudonana (Marine diatom).